Reading from the N-terminus, the 373-residue chain is Dual-specificity RNA methyltransferase RlmN (373 aa).

Glutamate 94 (proton acceptor) is an active-site residue. A Radical SAM core domain is found at 100-339 (EDDRATLCVS…VIVRKTRGDD (240 aa)). Cysteine 107 and cysteine 344 are joined by a disulfide. 3 residues coordinate [4Fe-4S] cluster: cysteine 114, cysteine 118, and cysteine 121. S-adenosyl-L-methionine-binding positions include 168-169 (GE), serine 200, 222-224 (SIH), and asparagine 301. Residue cysteine 344 is the S-methylcysteine intermediate of the active site.

Belongs to the radical SAM superfamily. RlmN family. The cofactor is [4Fe-4S] cluster.

Its subcellular location is the cytoplasm. It carries out the reaction adenosine(2503) in 23S rRNA + 2 reduced [2Fe-2S]-[ferredoxin] + 2 S-adenosyl-L-methionine = 2-methyladenosine(2503) in 23S rRNA + 5'-deoxyadenosine + L-methionine + 2 oxidized [2Fe-2S]-[ferredoxin] + S-adenosyl-L-homocysteine. It catalyses the reaction adenosine(37) in tRNA + 2 reduced [2Fe-2S]-[ferredoxin] + 2 S-adenosyl-L-methionine = 2-methyladenosine(37) in tRNA + 5'-deoxyadenosine + L-methionine + 2 oxidized [2Fe-2S]-[ferredoxin] + S-adenosyl-L-homocysteine. Specifically methylates position 2 of adenine 2503 in 23S rRNA and position 2 of adenine 37 in tRNAs. m2A2503 modification seems to play a crucial role in the proofreading step occurring at the peptidyl transferase center and thus would serve to optimize ribosomal fidelity. The polypeptide is Dual-specificity RNA methyltransferase RlmN (Shewanella woodyi (strain ATCC 51908 / MS32)).